We begin with the raw amino-acid sequence, 627 residues long: UvrABC system protein C (627 aa).

The 80-residue stretch at 26-105 (PEPGVYFMRD…IKQHQPYFNV (80 aa)) folds into the GIY-YIG domain. One can recognise a UVR domain in the interval 215-250 (QELIDILSEQMEKAAEALNFEVAARIRDQIAGLKSL).

The protein belongs to the UvrC family. As to quaternary structure, interacts with UvrB in an incision complex.

It is found in the cytoplasm. In terms of biological role, the UvrABC repair system catalyzes the recognition and processing of DNA lesions. UvrC both incises the 5' and 3' sides of the lesion. The N-terminal half is responsible for the 3' incision and the C-terminal half is responsible for the 5' incision. This is UvrABC system protein C from Nostoc sp. (strain PCC 7120 / SAG 25.82 / UTEX 2576).